Consider the following 274-residue polypeptide: Secreted RxLR effector protein 40 (274 aa).

The N-terminal stretch at 1–21 (MRLYTQVVAASLVATLAIVDS) is a signal peptide. A RxLR-dEER motif is present at residues 35 to 53 (RFLRQDNATVARVSEDGER). N-linked (GlcNAc...) asparagine glycosylation is found at asparagine 41, asparagine 74, and asparagine 258.

It belongs to the RxLR effector family.

It localises to the secreted. Its subcellular location is the host nucleus. The protein localises to the host cytoplasm. Its function is as follows. Secreted effector that completely suppresses the host cell death induced by cell death-inducing proteins. This Plasmopara viticola (Downy mildew of grapevine) protein is Secreted RxLR effector protein 40.